A 612-amino-acid polypeptide reads, in one-letter code: Baeyer-Villiger monooxygenase 4 (612 aa).

Residues Glu99, 107 to 110 (TWYW), Asp119, Tyr125, and Ala169 contribute to the FAD site. An NADP(+)-binding site is contributed by 117–119 (QCD). NADP(+)-binding positions include 253 to 259 (TGATGVQ), 276 to 277 (RT), and 393 to 394 (KR).

Belongs to the FAD-binding monooxygenase family. Requires FAD as cofactor.

Catalyzes a Baeyer-Villiger oxidation reaction, i.e. the insertion of an oxygen atom into a carbon-carbon bond adjacent to a carbonyl, which converts ketones to esters or lactones using NADPH as an electron donor. Has a broad substrate scope and oxidizes different compounds including substituted and unsubstituted alicyclic, bicyclic-, aliphatic-ketones, ketones with an aromatic moiety, and sulfides. The highest activities are measured for 2- and 3-methylcyclohexanone, phenylacetone, bicyclo[3.2.0]hept-2-en-6-one and menthone. Cannot use NADH instead of NADPH. Is not active on benzaldehyde. The sequence is that of Baeyer-Villiger monooxygenase 4 from Dietzia sp. (strain D5).